A 430-amino-acid polypeptide reads, in one-letter code: Tol-Pal system protein TolB (430 aa).

The first 21 residues, 1–21, serve as a signal peptide directing secretion; sequence MKQALRVAFGFLMLWAAVLHA.

It belongs to the TolB family. As to quaternary structure, the Tol-Pal system is composed of five core proteins: the inner membrane proteins TolA, TolQ and TolR, the periplasmic protein TolB and the outer membrane protein Pal. They form a network linking the inner and outer membranes and the peptidoglycan layer.

Its subcellular location is the periplasm. In terms of biological role, part of the Tol-Pal system, which plays a role in outer membrane invagination during cell division and is important for maintaining outer membrane integrity. TolB occupies a key intermediary position in the Tol-Pal system because it communicates directly with both membrane-embedded components, Pal in the outer membrane and TolA in the inner membrane. The protein is Tol-Pal system protein TolB of Salmonella choleraesuis (strain SC-B67).